Reading from the N-terminus, the 76-residue chain is uORF2 protein (76 aa).

Plays a role in viral replication. The protein is uORF2 protein of Zika virus (isolate ZIKV/Human/French Polynesia/10087PF/2013) (ZIKV).